Here is a 348-residue protein sequence, read N- to C-terminus: MTQIADRPARPDETLAVAVSDITQSLTMVQAINRALYDAMAADERVLVFGEDVAVEGGVFRVTEGLADTFGADRCFDTPLAESAIIGIAVGLALRGFVPVPEIQFDGFSYPAFDQVVSHLAKYRTRTRGEVDMPVTVRIPSFGGIGAAEHHSDSTESYWVHTAGLKVVVPSTPGDAYWLLRHAIACPDPVMYLEPKRRYHGRGMVDTSRPEPPIGHAMVRRSGTDVTVVTYGNLVSTALSSADTAEQQHDWSLEVIDLRSLAPLDFDTIAASIQRTGRCVVMHEGPRSLGYGAGLAARIQEEMFYQLEAPVLRACGFDTPYPPARLEKLWLPGPDRLLDCVERVLRQP.

Thiamine diphosphate is bound by residues Glu51, 80 to 82, Gln104, and 108 to 111; these read LAE and FSYP. Substrate contacts are provided by residues 105–108 and His151; that span reads FDGF. The active-site Proton acceptor is His151.

Heteromer of E1 alpha (BkdA) and beta (BkdB) subunits. Part of the BCKADH complex, consisting of multiple copies of BkdA/BkdB (E1), BkdC (E2) and Lpd (E3). It depends on thiamine diphosphate as a cofactor.

It catalyses the reaction N(6)-[(R)-lipoyl]-L-lysyl-[protein] + 3-methyl-2-oxobutanoate + H(+) = N(6)-[(R)-S(8)-2-methylpropanoyldihydrolipoyl]-L-lysyl-[protein] + CO2. In terms of biological role, component of the branched-chain alpha-ketoacid dehydrogenase (BCKADH) complex, that catalyzes the overall conversion of branched-chain alpha-ketoacids to acyl-CoA and CO(2). This Mycobacterium tuberculosis (strain CDC 1551 / Oshkosh) protein is 3-methyl-2-oxobutanoate dehydrogenase subunit beta (bkdB).